A 355-amino-acid polypeptide reads, in one-letter code: UDP-N-acetylglucosamine--N-acetylmuramyl-(pentapeptide) pyrophosphoryl-undecaprenol N-acetylglucosamine transferase (355 aa).

UDP-N-acetyl-alpha-D-glucosamine is bound by residues 15–17 (TGG), Asn127, Arg163, Ser191, Ile245, 264–269 (ALTVSE), and Gln289.

It belongs to the glycosyltransferase 28 family. MurG subfamily.

Its subcellular location is the cell inner membrane. It catalyses the reaction di-trans,octa-cis-undecaprenyl diphospho-N-acetyl-alpha-D-muramoyl-L-alanyl-D-glutamyl-meso-2,6-diaminopimeloyl-D-alanyl-D-alanine + UDP-N-acetyl-alpha-D-glucosamine = di-trans,octa-cis-undecaprenyl diphospho-[N-acetyl-alpha-D-glucosaminyl-(1-&gt;4)]-N-acetyl-alpha-D-muramoyl-L-alanyl-D-glutamyl-meso-2,6-diaminopimeloyl-D-alanyl-D-alanine + UDP + H(+). It functions in the pathway cell wall biogenesis; peptidoglycan biosynthesis. In terms of biological role, cell wall formation. Catalyzes the transfer of a GlcNAc subunit on undecaprenyl-pyrophosphoryl-MurNAc-pentapeptide (lipid intermediate I) to form undecaprenyl-pyrophosphoryl-MurNAc-(pentapeptide)GlcNAc (lipid intermediate II). This chain is UDP-N-acetylglucosamine--N-acetylmuramyl-(pentapeptide) pyrophosphoryl-undecaprenol N-acetylglucosamine transferase, found in Yersinia enterocolitica serotype O:8 / biotype 1B (strain NCTC 13174 / 8081).